A 358-amino-acid chain; its full sequence is tRNA-specific 2-thiouridylase MnmA (358 aa).

ATP is bound by residues A10–S17 and M36. C105 (nucleophile) is an active-site residue. C105 and C202 are joined by a disulfide. G129 serves as a coordination point for ATP. The interaction with tRNA stretch occupies residues K152–Q154. The active-site Cysteine persulfide intermediate is C202. Residues R308–Y309 are interaction with tRNA.

The protein belongs to the MnmA/TRMU family.

Its subcellular location is the cytoplasm. It carries out the reaction S-sulfanyl-L-cysteinyl-[protein] + uridine(34) in tRNA + AH2 + ATP = 2-thiouridine(34) in tRNA + L-cysteinyl-[protein] + A + AMP + diphosphate + H(+). Catalyzes the 2-thiolation of uridine at the wobble position (U34) of tRNA, leading to the formation of s(2)U34. The protein is tRNA-specific 2-thiouridylase MnmA of Magnetococcus marinus (strain ATCC BAA-1437 / JCM 17883 / MC-1).